Consider the following 270-residue polypeptide: 4-hydroxy-tetrahydrodipicolinate reductase (270 aa).

NAD(+) contacts are provided by residues 9–14 (GAGGRM) and glutamate 35. Arginine 36 is a binding site for NADP(+). Residues 99 to 101 (GTT) and 123 to 126 (ASNF) contribute to the NAD(+) site. The active-site Proton donor/acceptor is histidine 156. Histidine 157 is a (S)-2,3,4,5-tetrahydrodipicolinate binding site. Catalysis depends on lysine 160, which acts as the Proton donor. 166-167 (GT) provides a ligand contact to (S)-2,3,4,5-tetrahydrodipicolinate.

This sequence belongs to the DapB family.

It localises to the cytoplasm. The enzyme catalyses (S)-2,3,4,5-tetrahydrodipicolinate + NAD(+) + H2O = (2S,4S)-4-hydroxy-2,3,4,5-tetrahydrodipicolinate + NADH + H(+). It carries out the reaction (S)-2,3,4,5-tetrahydrodipicolinate + NADP(+) + H2O = (2S,4S)-4-hydroxy-2,3,4,5-tetrahydrodipicolinate + NADPH + H(+). Its pathway is amino-acid biosynthesis; L-lysine biosynthesis via DAP pathway; (S)-tetrahydrodipicolinate from L-aspartate: step 4/4. Functionally, catalyzes the conversion of 4-hydroxy-tetrahydrodipicolinate (HTPA) to tetrahydrodipicolinate. This Pasteurella multocida (strain Pm70) protein is 4-hydroxy-tetrahydrodipicolinate reductase.